The sequence spans 427 residues: Histidine--tRNA ligase (427 aa).

The protein belongs to the class-II aminoacyl-tRNA synthetase family. As to quaternary structure, homodimer.

It localises to the cytoplasm. It catalyses the reaction tRNA(His) + L-histidine + ATP = L-histidyl-tRNA(His) + AMP + diphosphate + H(+). The polypeptide is Histidine--tRNA ligase (Mannheimia succiniciproducens (strain KCTC 0769BP / MBEL55E)).